The sequence spans 82 residues: Toxin NaTx-13 (82 aa).

The LCN-type CS-alpha/beta domain maps to 6 to 70 (PGGYPVNQFK…KNSIEVFSCG (65 aa)). Disulfide bonds link Cys16/Cys69, Cys20/Cys44, Cys30/Cys49, and Cys34/Cys51.

Belongs to the long (4 C-C) scorpion toxin superfamily. Sodium channel inhibitor family. As to expression, expressed by the venom gland.

It localises to the secreted. In terms of biological role, probable sodium channel inhibitor. This is Toxin NaTx-13 from Centruroides sculpturatus (Arizona bark scorpion).